Consider the following 521-residue polypeptide: Bifunctional purine biosynthesis protein PurH (521 aa).

Positions 1–145 (MIKQALISVS…KNHRDVTVVV (145 aa)) constitute an MGS-like domain.

Belongs to the PurH family.

The enzyme catalyses (6R)-10-formyltetrahydrofolate + 5-amino-1-(5-phospho-beta-D-ribosyl)imidazole-4-carboxamide = 5-formamido-1-(5-phospho-D-ribosyl)imidazole-4-carboxamide + (6S)-5,6,7,8-tetrahydrofolate. The catalysed reaction is IMP + H2O = 5-formamido-1-(5-phospho-D-ribosyl)imidazole-4-carboxamide. It functions in the pathway purine metabolism; IMP biosynthesis via de novo pathway; 5-formamido-1-(5-phospho-D-ribosyl)imidazole-4-carboxamide from 5-amino-1-(5-phospho-D-ribosyl)imidazole-4-carboxamide (10-formyl THF route): step 1/1. Its pathway is purine metabolism; IMP biosynthesis via de novo pathway; IMP from 5-formamido-1-(5-phospho-D-ribosyl)imidazole-4-carboxamide: step 1/1. The chain is Bifunctional purine biosynthesis protein PurH from Burkholderia orbicola (strain MC0-3).